A 295-amino-acid polypeptide reads, in one-letter code: Release factor glutamine methyltransferase (295 aa).

S-adenosyl-L-methionine-binding positions include G127–G131, D150, F179, and N195. Substrate is bound at residue N195–Y198.

It belongs to the protein N5-glutamine methyltransferase family. PrmC subfamily.

The catalysed reaction is L-glutaminyl-[peptide chain release factor] + S-adenosyl-L-methionine = N(5)-methyl-L-glutaminyl-[peptide chain release factor] + S-adenosyl-L-homocysteine + H(+). Its function is as follows. Methylates the class 1 translation termination release factors RF1/PrfA and RF2/PrfB on the glutamine residue of the universally conserved GGQ motif. This is Release factor glutamine methyltransferase from Nitratidesulfovibrio vulgaris (strain ATCC 29579 / DSM 644 / CCUG 34227 / NCIMB 8303 / VKM B-1760 / Hildenborough) (Desulfovibrio vulgaris).